A 302-amino-acid chain; its full sequence is Thioredoxin-like protein CDSP32, chloroplastic (302 aa).

A chloroplast-targeting transit peptide spans 1 to 56 (MATVANFLAKPISTVVPRPSSAVASTSSFVFFNHKTNPLFRRKNLPKRLFSAVKIK). The 136-residue stretch at 163 to 298 (HEEEGIEPDQ…IGEILRYSGV (136 aa)) folds into the Thioredoxin domain. Catalysis depends on nucleophile residues Cys-219 and Cys-222. Cys-219 and Cys-222 are disulfide-bonded.

The protein belongs to the thioredoxin family. As to quaternary structure, interacts with the plastidial peroxiredoxin BAS1.

It localises to the plastid. It is found in the chloroplast stroma. In terms of biological role, probable thiol-disulfide oxidoreductase involved in resistance to oxidative stress. May participate in the reduction of alkyl hydroperoxides derived from oxidative stress by acting as a physiological electron donor to the BAS1 peroxiredoxin. May regenerate methionine sulfoxide reductase B1 (MSRB1) activity through sulfenic acid reduction. The protein is Thioredoxin-like protein CDSP32, chloroplastic (CDSP32) of Arabidopsis thaliana (Mouse-ear cress).